Consider the following 470-residue polypeptide: NKIKPGVAYSVITTENDTQTVFVDMPRLERRRANPKDVAAVILGGGEGTKLFPLTSRTATPAVPVGGCYRLIDIPMSNCINSAINKIFVLTQYNSAPLNRHIARTYFGNGVSFGDGFVEVLAATQTPGEAGKKWFQGTADAVRKFIWVFEDAKNKNIENIVVLSGDHLYRMDYMELVQNHIDRNADITLSCAPAEDSRASDFGLVKIDSRGRVVQFAEKPKGFDLKAMQVDTTLVGLSPQDAKKSPYIASMGVYVFKTDVLLKLLKWSYPTSNDFGSEIIPAAIDDYNVQAYIFKDYWEDIGTIKSFYNASLALTQEFPEFQFYDPKTPFYTSPRFLPPTKIDNCKIKDAIISHGCFLRDCSVEHSIVGERSRLDCGVELKDTFMMGADYYQTESEIASLLAEGKVPIGIGENTKIRKCIIDKNAKIGKNVSIINKDGVQEADRPEEGFYIRSGIIIILEKATIRDGTVI.

It belongs to the bacterial/plant glucose-1-phosphate adenylyltransferase family. As to quaternary structure, heterotetramer. Prominently expressed in the leaves and a weaker expression is seen in the tubers.

The protein localises to the plastid. It localises to the chloroplast. The protein resides in the amyloplast. It carries out the reaction alpha-D-glucose 1-phosphate + ATP + H(+) = ADP-alpha-D-glucose + diphosphate. The protein operates within glycan biosynthesis; starch biosynthesis. Activated by 3'phosphoglycerate, inhibited by orthophosphate. Allosteric regulation. In terms of biological role, this protein plays a role in synthesis of starch. It catalyzes the synthesis of the activated glycosyl donor, ADP-glucose from Glc-1-P and ATP. The sequence is that of Glucose-1-phosphate adenylyltransferase large subunit 1 (AGPS1) from Solanum tuberosum (Potato).